Reading from the N-terminus, the 184-residue chain is Ribosome-recycling factor (184 aa).

The segment at 133–153 (DSNDELKKQQKNSDITEDDLR) is disordered.

Belongs to the RRF family.

It is found in the cytoplasm. Responsible for the release of ribosomes from messenger RNA at the termination of protein biosynthesis. May increase the efficiency of translation by recycling ribosomes from one round of translation to another. The chain is Ribosome-recycling factor from Staphylococcus saprophyticus subsp. saprophyticus (strain ATCC 15305 / DSM 20229 / NCIMB 8711 / NCTC 7292 / S-41).